The primary structure comprises 577 residues: BICD family-like cargo adapter 1 (577 aa).

Positions 63–100 (LLAAGERSSEPGEHPQAEPESPVEGHGPPLPPPPTQDP) are disordered. The segment covering 69–79 (RSSEPGEHPQA) has biased composition (basic and acidic residues). The short motif at 116–120 (AARLG) is the CC1 box element. A coiled-coil region spans residues 121 to 379 (KALLERNQDM…QLWEAYCQVR (259 aa)). The tract at residues 389 to 415 (DSADSAVSTDSSMDESSETSSAKDVPA) is disordered. Residues 390-399 (SADSAVSTDS) show a composition bias toward low complexity. Residues 443–528 (LSVEMTALKE…LEAWQDDMHR (86 aa)) adopt a coiled-coil conformation.

Belongs to the BICDR family. In terms of assembly, part of a tripartite complex with dynein and dynactin, acts an adapter linking the dynein motor complex and dynactin. Interacts with KIF1C. Interacts with RAB6A and RAB6B; interaction is specific to Rab6. In terms of tissue distribution, highly expressed during early embryonic development. Predominantly expressed in kidney, undifferentiated neural tissue and developing eye.

The protein localises to the cytoplasm. The protein resides in the cytoskeleton. It is found in the microtubule organizing center. Its subcellular location is the centrosome. In terms of biological role, acts as an adapter protein linking the dynein motor complex to various cargos and converts dynein from a non-processive to a highly processive motor in the presence of dynactin. Facilitates the interaction between dynein and dynactin and activates dynein processivity (the ability to move along a microtubule for a long distance without falling off the track). Predominantly recruits 2 dyneins, which increases both the force and speed of the microtubule motor. Component of secretory vesicle machinery in developing neurons that acts as a regulator of neurite outgrowth. Regulates the secretory vesicle transport by controlling the accumulation of Rab6-containing secretory vesicles in the pericentrosomal region restricting anterograde secretory transport during the early phase of neuronal differentiation, thereby inhibiting neuritogenesis. The chain is BICD family-like cargo adapter 1 (Bicdl1) from Mus musculus (Mouse).